The primary structure comprises 80 residues: Putative membrane protein insertion efficiency factor (80 aa).

It belongs to the UPF0161 family.

It is found in the cell inner membrane. Its function is as follows. Could be involved in insertion of integral membrane proteins into the membrane. This Paracoccus denitrificans (strain Pd 1222) protein is Putative membrane protein insertion efficiency factor.